The primary structure comprises 169 residues: Large ribosomal subunit protein uL10 (169 aa).

It belongs to the universal ribosomal protein uL10 family. As to quaternary structure, part of the ribosomal stalk of the 50S ribosomal subunit. The N-terminus interacts with L11 and the large rRNA to form the base of the stalk. The C-terminus forms an elongated spine to which L12 dimers bind in a sequential fashion forming a multimeric L10(L12)X complex.

In terms of biological role, forms part of the ribosomal stalk, playing a central role in the interaction of the ribosome with GTP-bound translation factors. This Rickettsia massiliae (strain Mtu5) protein is Large ribosomal subunit protein uL10.